A 412-amino-acid chain; its full sequence is Angiopoietin-related protein 4 (412 aa).

The first 23 residues, 1 to 23 (MRSAPTARAALVLCAATAGLLSA), serve as a signal peptide directing secretion. A coiled-coil region spans residues 106–153 (ETLHSLQTQLKAQNSKIQQLFQKVAQQQRHLEKQHLRIQNLQGQLDHL). An N-linked (GlcNAc...) asparagine glycan is attached at N183. The Fibrinogen C-terminal domain occupies 185-407 (SRLHRLPRDC…ATTMLIQPTV (223 aa)). 2 cysteine pairs are disulfide-bonded: C194-C222 and C347-C360.

In terms of assembly, homooligomer; disulfide-linked via Cys residues in the N-terminal part of the protein. The homooligomer undergoes proteolytic processing to release the ANGPTL4 C-terminal chain, which circulates as a monomer. The homooligomer unprocessed form is able to interact with the extracellular matrix. In terms of processing, N-glycosylated. Post-translationally, forms disulfide-linked dimers and tetramers. Cleaved into a smaller N-terminal chain and a larger chain that contains the fibrinogen C-terminal domain; both cleaved and uncleaved forms are detected in the extracellular space. The cleaved form is not present within the cell.

It is found in the secreted. Its subcellular location is the extracellular space. The protein resides in the extracellular matrix. Mediates inactivation of the lipoprotein lipase LPL, and thereby plays a role in the regulation of triglyceride clearance from the blood serum and in lipid metabolism. May also play a role in regulating glucose homeostasis and insulin sensitivity. Inhibits proliferation, migration, and tubule formation of endothelial cells and reduces vascular leakage. Upon heterologous expression, inhibits the adhesion of endothelial cell to the extracellular matrix (ECM), and inhibits the reorganization of the actin cytoskeleton, formation of actin stress fibers and focal adhesions in endothelial cells that have adhered to ANGPTL4-containing ECM (in vitro). Depending on context, may modulate tumor-related angiogenesis. Its function is as follows. Mediates inactivation of the lipoprotein lipase LPL, and thereby plays an important role in the regulation of triglyceride clearance from the blood serum and in lipid metabolism. Has higher activity in LPL inactivation than the uncleaved protein. The sequence is that of Angiopoietin-related protein 4 (ANGPTL4) from Sus scrofa (Pig).